A 121-amino-acid chain; its full sequence is Small ribosomal subunit protein uS13 (121 aa).

The disordered stretch occupies residues 91–121 (HRRGLPVRGQKTKNNARTRKGPVKTVANKKK).

This sequence belongs to the universal ribosomal protein uS13 family. Part of the 30S ribosomal subunit. Forms a loose heterodimer with protein S19. Forms two bridges to the 50S subunit in the 70S ribosome.

Located at the top of the head of the 30S subunit, it contacts several helices of the 16S rRNA. In the 70S ribosome it contacts the 23S rRNA (bridge B1a) and protein L5 of the 50S subunit (bridge B1b), connecting the 2 subunits; these bridges are implicated in subunit movement. Contacts the tRNAs in the A and P-sites. This Staphylococcus saprophyticus subsp. saprophyticus (strain ATCC 15305 / DSM 20229 / NCIMB 8711 / NCTC 7292 / S-41) protein is Small ribosomal subunit protein uS13.